The following is a 154-amino-acid chain: uncharacterized protein (154 aa).

A signal peptide spans 1–21 (MSISSGSFAQPAAVVSSPGVT).

Belongs to the ivy family.

The protein localises to the periplasm. This is an uncharacterized protein from Yersinia pestis.